The following is a 183-amino-acid chain: Ribosome rescue factor SmrB (183 aa).

A Smr domain is found at 98 to 173; sequence LDLHGLTQMQ…GDAALLVLIE (76 aa).

The protein belongs to the SmrB family. Associates with collided ribosomes, but not with correctly translating polysomes.

Acts as a ribosome collision sensor. Detects stalled/collided disomes (pairs of ribosomes where the leading ribosome is stalled and a second ribosome has collided with it) and endonucleolytically cleaves mRNA at the 5' boundary of the stalled ribosome. Stalled/collided disomes form a new interface (primarily via the 30S subunits) that binds SmrB. Cleaved mRNA becomes available for tmRNA ligation, leading to ribosomal subunit dissociation and rescue of stalled ribosomes. The protein is Ribosome rescue factor SmrB of Enterobacter sp. (strain 638).